We begin with the raw amino-acid sequence, 139 residues long: Gonadotropin subunit beta-2 (139 aa).

An N-terminal signal peptide occupies residues 1-24 (MFPLVLSLFLGATSDIWPLAPAEA). 6 cysteine pairs are disulfide-bonded: Cys-30-Cys-78, Cys-44-Cys-93, Cys-47-Cys-131, Cys-55-Cys-109, Cys-59-Cys-111, and Cys-114-Cys-121. An N-linked (GlcNAc...) asparagine glycan is attached at Asn-34.

This sequence belongs to the glycoprotein hormones subunit beta family. As to quaternary structure, heterodimer of an alpha and a beta chain.

The protein resides in the secreted. Involved in gametogenesis and steroidogenesis. In Morone saxatilis (Striped bass), this protein is Gonadotropin subunit beta-2 (cgbb).